Consider the following 345-residue polypeptide: Tyrosine-binding protein (345 aa).

An N-terminal signal peptide occupies residues 1–23; that stretch reads MIKSKKILSLIIAGVLGVSMLTG. A lipid anchor (N-palmitoyl cysteine) is attached at Cys-24. The S-diacylglycerol cysteine moiety is linked to residue Cys-24.

As to quaternary structure, the complex is probably composed of two ATP-binding proteins (CDR20291_0806), two transmembrane proteins (CDR20291_0807) and a solute-binding protein (CDR20291_0805).

It localises to the cell membrane. Its function is as follows. Probably part of an ABC transporter complex involved in tyrosine uptake. May also import phenylalanine. The chain is Tyrosine-binding protein from Clostridioides difficile (strain R20291) (Peptoclostridium difficile).